We begin with the raw amino-acid sequence, 600 residues long: Elongation factor 4 (600 aa).

Residues 5–187 (KYIRNFSIVA…EIVEKIPAPE (183 aa)) form the tr-type G domain. GTP is bound by residues 17–22 (DHGKST) and 134–137 (NKVD).

This sequence belongs to the TRAFAC class translation factor GTPase superfamily. Classic translation factor GTPase family. LepA subfamily.

The protein resides in the cell membrane. The catalysed reaction is GTP + H2O = GDP + phosphate + H(+). Functionally, required for accurate and efficient protein synthesis under certain stress conditions. May act as a fidelity factor of the translation reaction, by catalyzing a one-codon backward translocation of tRNAs on improperly translocated ribosomes. Back-translocation proceeds from a post-translocation (POST) complex to a pre-translocation (PRE) complex, thus giving elongation factor G a second chance to translocate the tRNAs correctly. Binds to ribosomes in a GTP-dependent manner. The polypeptide is Elongation factor 4 (Clostridium perfringens (strain 13 / Type A)).